A 308-amino-acid chain; its full sequence is Glucan 1,3-beta-glucosidase (308 aa).

Residues 1-18 (MQIKFLTTLATVLTSVAA) form the signal peptide. E119 acts as the Proton donor in catalysis. N197 carries N-linked (GlcNAc...) asparagine glycosylation. Residue E228 is the Nucleophile of the active site.

This sequence belongs to the glycosyl hydrolase 17 family.

It localises to the secreted. It is found in the cell wall. It catalyses the reaction Successive hydrolysis of beta-D-glucose units from the non-reducing ends of (1-&gt;3)-beta-D-glucans, releasing alpha-glucose.. This Candida albicans (Yeast) protein is Glucan 1,3-beta-glucosidase (BGL2).